The sequence spans 433 residues: Trigger factor (433 aa).

The 86-residue stretch at 166–251 (GDFAVIDFEG…LHEIQERAKP (86 aa)) folds into the PPIase FKBP-type domain.

This sequence belongs to the FKBP-type PPIase family. Tig subfamily.

The protein resides in the cytoplasm. It carries out the reaction [protein]-peptidylproline (omega=180) = [protein]-peptidylproline (omega=0). Functionally, involved in protein export. Acts as a chaperone by maintaining the newly synthesized protein in an open conformation. Functions as a peptidyl-prolyl cis-trans isomerase. This Aliarcobacter butzleri (strain RM4018) (Arcobacter butzleri) protein is Trigger factor.